The following is a 727-amino-acid chain: MLRIPVRKALVGLSKSPKGCVRTTATAASNLIEVFVDGQSVMVEPGTTVLQACEKVGMQIPRFCYHERLSVAGNCRMCLVEIEKAPKVVAACAMPVMKGWNILTNSEKSKKAREGVMEFLLANHPLDCPICDQGGECDLQDQSMMFGNDRSRFLEGKRAVEDKNIGPLVKTIMTRCIQCTRCIRFASEIAGVDDLGTTGRGNDMQVGTYIEKMFMSELSGNIIDICPVGALTSKPYAFTARPWETRKTESIDVMDAVGSNIVVSTRTGEVMRILPRMHEDINEXWISDKTRFAYDGLKRQRLTEPMVRNEKGLLTYTSWEDALSRVAGMLQSFQGKDVAAIAGGLVDAEALVALKDLLNRVDSDTLCTEEVFPTAGAGTDLRSNYLLNTTIAGVEEADVVLLVGTNPRFEAPLFNARIRKSWLHNDLKVALIGSPVDLTYTYDHLGDSPKILQDIASGSHPFSQVLKEAKKPMVVLGSSALQRNDGAAILAAVSSIAQKIRMTSGVTGDWKVMNILHRIASQVAALDLGYKPGVEAIRKNPPKVLFLLGADGGCITRQDLPKDCFIIYQGHHGDVGAPIADVILPGAAYTEKSATYVNTEGRAQQTKVAVTPPGLAREDWKIIRALSEIAGMTLPYDTLDQVRNRLEEVSPNLVRYDDIEGANYFQQANELSKLVNQQLLADPLVPPQLTIKDFYMTDSISRASQTMAKCVKAVTEGAQAVEEPSIC.

The N-terminal 23 residues, 1–23, are a transit peptide targeting the mitochondrion; sequence MLRIPVRKALVGLSKSPKGCVRT. The 2Fe-2S ferredoxin-type domain maps to 30-108; sequence NLIEVFVDGQ…GWNILTNSEK (79 aa). [2Fe-2S] cluster is bound by residues Cys64, Cys75, and Cys78. Position 84 is an N6-acetyllysine (Lys84). [2Fe-2S] cluster is bound at residue Cys92. Residues 108–147 enclose the 4Fe-4S His(Cys)3-ligated-type domain; that stretch reads KSKKAREGVMEFLLANHPLDCPICDQGGECDLQDQSMMFG. [4Fe-4S] cluster is bound by residues His124, Cys128, Cys131, Cys137, Cys176, Cys179, Cys182, and Cys226. One can recognise a 4Fe-4S Mo/W bis-MGD-type domain in the interval 245 to 301; it reads TRKTESIDVMDAVGSNIVVSTRTGEVMRILPRMHEDINEXWISDKTRFAYDGLKRQR. N6-acetyllysine is present on residues Lys467, Lys499, and Lys709.

The protein belongs to the complex I 75 kDa subunit family. Core subunit of respiratory chain NADH dehydrogenase (Complex I) which is composed of 45 different subunits. This is the largest subunit of complex I and it is a component of the iron-sulfur (IP) fragment of the enzyme. Complex I associates with ubiquinol-cytochrome reductase complex (Complex III) to form supercomplexes. Interacts with MDM2 and AKAP1. It depends on [2Fe-2S] cluster as a cofactor. [4Fe-4S] cluster is required as a cofactor.

It is found in the mitochondrion inner membrane. The catalysed reaction is a ubiquinone + NADH + 5 H(+)(in) = a ubiquinol + NAD(+) + 4 H(+)(out). Its function is as follows. Core subunit of the mitochondrial membrane respiratory chain NADH dehydrogenase (Complex I) which catalyzes electron transfer from NADH through the respiratory chain, using ubiquinone as an electron acceptor. Essential for catalysing the entry and efficient transfer of electrons within complex I. Plays a key role in the assembly and stability of complex I and participates in the association of complex I with ubiquinol-cytochrome reductase complex (Complex III) to form supercomplexes. The polypeptide is NADH-ubiquinone oxidoreductase 75 kDa subunit, mitochondrial (NDUFS1) (Gorilla gorilla gorilla (Western lowland gorilla)).